A 200-amino-acid polypeptide reads, in one-letter code: dTTP/UTP pyrophosphatase (200 aa).

The active-site Proton acceptor is the D81.

The protein belongs to the Maf family. YhdE subfamily. Requires a divalent metal cation as cofactor.

It localises to the cytoplasm. The catalysed reaction is dTTP + H2O = dTMP + diphosphate + H(+). It catalyses the reaction UTP + H2O = UMP + diphosphate + H(+). Functionally, nucleoside triphosphate pyrophosphatase that hydrolyzes dTTP and UTP. May have a dual role in cell division arrest and in preventing the incorporation of modified nucleotides into cellular nucleic acids. The sequence is that of dTTP/UTP pyrophosphatase from Cupriavidus pinatubonensis (strain JMP 134 / LMG 1197) (Cupriavidus necator (strain JMP 134)).